The primary structure comprises 118 residues: Large ribosomal subunit protein bL20 (118 aa).

The protein belongs to the bacterial ribosomal protein bL20 family.

Binds directly to 23S ribosomal RNA and is necessary for the in vitro assembly process of the 50S ribosomal subunit. It is not involved in the protein synthesizing functions of that subunit. The polypeptide is Large ribosomal subunit protein bL20 (Erwinia tasmaniensis (strain DSM 17950 / CFBP 7177 / CIP 109463 / NCPPB 4357 / Et1/99)).